The chain runs to 88 residues: Small ribosomal subunit protein uS15 (88 aa).

It belongs to the universal ribosomal protein uS15 family. In terms of assembly, part of the 30S ribosomal subunit. Forms a bridge to the 50S subunit in the 70S ribosome, contacting the 23S rRNA.

In terms of biological role, one of the primary rRNA binding proteins, it binds directly to 16S rRNA where it helps nucleate assembly of the platform of the 30S subunit by binding and bridging several RNA helices of the 16S rRNA. Functionally, forms an intersubunit bridge (bridge B4) with the 23S rRNA of the 50S subunit in the ribosome. The protein is Small ribosomal subunit protein uS15 of Mycoplasmopsis agalactiae (strain NCTC 10123 / CIP 59.7 / PG2) (Mycoplasma agalactiae).